A 493-amino-acid chain; its full sequence is Probable malate:quinone oxidoreductase (493 aa).

The protein belongs to the MQO family. It depends on FAD as a cofactor.

The enzyme catalyses (S)-malate + a quinone = a quinol + oxaloacetate. It participates in carbohydrate metabolism; tricarboxylic acid cycle; oxaloacetate from (S)-malate (quinone route): step 1/1. The sequence is that of Probable malate:quinone oxidoreductase from Mycobacterium tuberculosis (strain ATCC 25177 / H37Ra).